The primary structure comprises 305 residues: Protoheme IX farnesyltransferase 2 (305 aa).

7 consecutive transmembrane segments (helical) span residues 38–58 (LITT…SFLG), 60–80 (LNTV…SCAV), 115–135 (ILLI…AAVI), 157–177 (INTV…WTAV), 181–201 (IGVV…PHFL), 236–256 (VACL…IVIL), and 285–305 (FVYS…FTLF).

It belongs to the UbiA prenyltransferase family. Protoheme IX farnesyltransferase subfamily. In terms of assembly, interacts with CtaA.

The protein resides in the cell membrane. It catalyses the reaction heme b + (2E,6E)-farnesyl diphosphate + H2O = Fe(II)-heme o + diphosphate. Its pathway is porphyrin-containing compound metabolism; heme O biosynthesis; heme O from protoheme: step 1/1. Converts heme B (protoheme IX) to heme O by substitution of the vinyl group on carbon 2 of heme B porphyrin ring with a hydroxyethyl farnesyl side group. The chain is Protoheme IX farnesyltransferase 2 from Bacillus velezensis (strain DSM 23117 / BGSC 10A6 / LMG 26770 / FZB42) (Bacillus amyloliquefaciens subsp. plantarum).